The primary structure comprises 581 residues: Aspartate--tRNA ligase (581 aa).

Glu170 is an L-aspartate binding site. Positions Gln194–Lys197 are aspartate. An L-aspartate-binding site is contributed by Arg216. Residues Arg216–Glu218 and Gln225 contribute to the ATP site. Residue His439 coordinates L-aspartate. An ATP-binding site is contributed by Glu468. Residue Arg475 coordinates L-aspartate. Gly520–Arg523 is a binding site for ATP.

The protein belongs to the class-II aminoacyl-tRNA synthetase family. Type 1 subfamily. As to quaternary structure, homodimer.

It is found in the cytoplasm. The enzyme catalyses tRNA(Asp) + L-aspartate + ATP = L-aspartyl-tRNA(Asp) + AMP + diphosphate. Catalyzes the attachment of L-aspartate to tRNA(Asp) in a two-step reaction: L-aspartate is first activated by ATP to form Asp-AMP and then transferred to the acceptor end of tRNA(Asp). The chain is Aspartate--tRNA ligase from Thermosipho melanesiensis (strain DSM 12029 / CIP 104789 / BI429).